Here is a 252-residue protein sequence, read N- to C-terminus: uncharacterized protein (252 aa).

An N-terminal signal peptide occupies residues 1-25; it reads MRKKKFLSRFAFGSLFLLCGTILSA. Residue Cys-26 is the site of N-palmitoyl cysteine attachment. Cys-26 is lipidated: S-diacylglycerol cysteine.

The protein belongs to the MG439/MG440 family.

The protein resides in the cell membrane. This is an uncharacterized protein from Mycoplasma pneumoniae (strain ATCC 29342 / M129 / Subtype 1) (Mycoplasmoides pneumoniae).